The sequence spans 732 residues: Iron-sulfur clusters transporter ATM1, mitochondrial (732 aa).

The N-terminal 55 residues, 1–55 (MGFGSCSRHALFTPAAFSGSFTTMTTSCFKRVYTAQIHGGDALGKRLPSVSSFSG), are a transit peptide targeting the mitochondrion. The Mitochondrial matrix segment spans residues 56–143 (QLPRHGLHRQ…KNNPNVKFRV (88 aa)). The segment at 71–114 (STSHRRQTSPPPSPRTTSQSPTVPSKASTTPPTSLNTSKPIATE) is disordered. Residues 85–95 (RTTSQSPTVPS) are compositionally biased toward low complexity. Over residues 96-114 (KASTTPPTSLNTSKPIATE) the composition is skewed to polar residues. The helical transmembrane segment at 144-164 (IGALTLLVAGKVLNVQVPFFF) threads the bilayer. An ABC transmembrane type-1 domain is found at 144–432 (IGALTLLVAG…LGTVYRELRQ (289 aa)). At 165-181 (KTIVDSLNVPITESTTV) the chain is on the mitochondrial intermembrane side. The chain crosses the membrane as a helical span at residues 182–202 (WVLAGASIAGYGAARILTTLF). At 203 to 262 (GELRNAVFASVAQNAIRKVARETFEHLLNMDMKFHLERQTGGLTRAIDRGTKGISFILSS) the chain is on the mitochondrial matrix side. Residues 263 to 283 (IVFHVIPTALEISMVCGILSW) form a helical membrane-spanning segment. Position 284 (Lys-284) is a topological domain, mitochondrial intermembrane. Residues 285–305 (FGWDFAAVTAITMLLYTWFTI) traverse the membrane as a helical segment. At 306-378 (KTTAWRTTFR…SLAALNSGQN (73 aa)) the chain is on the mitochondrial matrix side. Residues 311–315 (RTTFR) and 374–377 (NSGQ) each bind glutathione. The chain crosses the membrane as a helical span at residues 379 to 399 (FIFSSALTMMMLLGAQGIVKG). Over 400–405 (TMTVGD) the chain is Mitochondrial intermembrane. The chain crosses the membrane as a helical span at residues 406–426 (LVLVNQLVFQLSLPLNFLGTV). A glutathione-binding site is contributed by Gly-424. Topologically, residues 427-732 (YRELRQSLID…LEVVDEKKKQ (306 aa)) are mitochondrial matrix. The 237-residue stretch at 466–702 (IEFRNVAFAY…PGGVYHRLWQ (237 aa)) folds into the ABC transporter domain. ATP contacts are provided by residues Tyr-475 and 499-506 (GPSGCGKS). Positions 708 to 732 (STQPTDEEIERQREELEVVDEKKKQ) are disordered. The span at 717 to 732 (ERQREELEVVDEKKKQ) shows a compositional bias: basic and acidic residues.

Belongs to the ABC transporter superfamily. ABCB family. Heavy Metal importer (TC 3.A.1.210) subfamily. As to quaternary structure, homodimer.

Its subcellular location is the mitochondrion inner membrane. Its function is as follows. Performs an essential function in the generation of cytoplasmic iron-sulfur proteins by mediating the ATP-dependent export of mitochondrial Fe/S cluster precursors synthesized by NFS1 and other mitochondrial proteins. Hydrolyzes ATP. Binds glutathione and may function by transporting a glutathione-conjugated iron-sulfur compound. Plays a role during copper stress, in a manner dependent on the copper metalloregulatory transcription factor CUF1. The protein is Iron-sulfur clusters transporter ATM1, mitochondrial of Cryptococcus neoformans var. grubii serotype A (strain H99 / ATCC 208821 / CBS 10515 / FGSC 9487) (Filobasidiella neoformans var. grubii).